Here is a 489-residue protein sequence, read N- to C-terminus: Otolin-1-A (489 aa).

A signal peptide spans 1-23 (MPNILHPFIIIMTLLVVATGNQA). Positions 27–57 (KTTQWPRMKPTKKPPPRDEGPSKLGSISTTV) are disordered. N-linked (GlcNAc...) asparagine glycosylation is present at Asn-109. Residues 133–335 (GPVGEKGLPG…PGMKGTRGLK (203 aa)) form a disordered region. The segment covering 142–151 (GIPGGKGEMG) has biased composition (gly residues). 3 Collagen-like domains span residues 145 to 204 (GGKG…KGDK), 205 to 255 (GDTG…KGDK), and 264 to 323 (GQKG…PGQR). Residues 192–206 (QGEKGESGPKGDKGD) are compositionally biased toward basic and acidic residues. Asn-225 is a glycosylation site (N-linked (GlcNAc...) asparagine). A compositionally biased stretch (gly residues) spans 226–235 (GTKGGMGEPG). The span at 248–257 (IKGEKGDKGD) shows a compositional bias: basic and acidic residues. A glycan (N-linked (GlcNAc...) asparagine) is linked at Asn-287. Positions 290–310 (DGLPGSKGPKGDPGPLSKQGE) are enriched in low complexity. The region spanning 351 to 488 (AVQKRSAFSV…GFLLYADATK (138 aa)) is the C1q domain. N-linked (GlcNAc...) asparagine glycans are attached at residues Asn-391 and Asn-396.

It belongs to the OTOL1 family. As to quaternary structure, homooligomer; disulfide-linked; probably forms homotrimers. Interacts with otomp.

It is found in the secreted. It localises to the extracellular space. The protein resides in the extracellular matrix. Its function is as follows. Collagen-like protein, which provides an organic scaffold for otoliths onto the sensory epithelium of the inner ear. Acts as a scaffold for biomineralization by sequestering calcium. The sequence is that of Otolin-1-A (otol1a) from Danio rerio (Zebrafish).